The following is a 608-amino-acid chain: Centromere DNA-binding protein complex CBF3 subunit B (608 aa).

The segment at residues 14–42 (CSVCTRRKVKCDRMIPCGNCRKRGQDSEC) is a DNA-binding region (zn(2)-C6 fungal-type). Ser575 carries the post-translational modification Phosphoserine.

Component of the CBF3 copmplex, which is formed of CBF3A/CBF2, CBF3B/CEP3, CBF3C/CTF13 and CBF3D.

It localises to the nucleus. It is found in the chromosome. Its subcellular location is the centromere. In terms of biological role, acts as a component of the centromere DNA-binding protein complex CBF3, which is essential for chromosome segregation and movement of centromeres along microtubules. CBF3 is required for the recruitment of other kinetochore complexes to CEN DNA. It plays a role in the attachment of chromosomes to the spindle and binds selectively to a highly conserved DNA sequence called CDEIII, found in centromers and in several promoters. This Saccharomyces cerevisiae (strain ATCC 204508 / S288c) (Baker's yeast) protein is Centromere DNA-binding protein complex CBF3 subunit B (CEP3).